The following is a 353-amino-acid chain: Photosystem II D2 protein (353 aa).

Residue Thr-2 is modified to N-acetylthreonine. Phosphothreonine is present on Thr-2. The helical transmembrane segment at 41 to 61 threads the bilayer; sequence CAYFALGGWFTGTTFVTSWYT. His-118 lines the chlorophyll a pocket. A helical membrane pass occupies residues 125-141; it reads GFMLRQFELARSVQLRP. Pheophytin a is bound by residues Gln-130 and Asn-143. A helical membrane pass occupies residues 153–166; sequence VFVSVFLIYPLGQS. Position 198 (His-198) interacts with chlorophyll a. Residues 208–228 traverse the membrane as a helical segment; it reads AALLCAIHGATVENTLFEDGD. Residues His-215 and Phe-262 each contribute to the a plastoquinone site. His-215 serves as a coordination point for Fe cation. His-269 contributes to the Fe cation binding site. Residues 279–295 form a helical membrane-spanning segment; that stretch reads GLWMSAIGVVGLALNLR.

Belongs to the reaction center PufL/M/PsbA/D family. PSII is composed of 1 copy each of membrane proteins PsbA, PsbB, PsbC, PsbD, PsbE, PsbF, PsbH, PsbI, PsbJ, PsbK, PsbL, PsbM, PsbT, PsbX, PsbY, PsbZ, Psb30/Ycf12, at least 3 peripheral proteins of the oxygen-evolving complex and a large number of cofactors. It forms dimeric complexes. The cofactor is The D1/D2 heterodimer binds P680, chlorophylls that are the primary electron donor of PSII, and subsequent electron acceptors. It shares a non-heme iron and each subunit binds pheophytin, quinone, additional chlorophylls, carotenoids and lipids. There is also a Cl(-1) ion associated with D1 and D2, which is required for oxygen evolution. The PSII complex binds additional chlorophylls, carotenoids and specific lipids..

It is found in the plastid. It localises to the chloroplast thylakoid membrane. It catalyses the reaction 2 a plastoquinone + 4 hnu + 2 H2O = 2 a plastoquinol + O2. In terms of biological role, photosystem II (PSII) is a light-driven water:plastoquinone oxidoreductase that uses light energy to abstract electrons from H(2)O, generating O(2) and a proton gradient subsequently used for ATP formation. It consists of a core antenna complex that captures photons, and an electron transfer chain that converts photonic excitation into a charge separation. The D1/D2 (PsbA/PsbD) reaction center heterodimer binds P680, the primary electron donor of PSII as well as several subsequent electron acceptors. D2 is needed for assembly of a stable PSII complex. The protein is Photosystem II D2 protein of Phalaenopsis aphrodite subsp. formosana (Moth orchid).